A 110-amino-acid chain; its full sequence is Large ribosomal subunit protein uL22 (110 aa).

It belongs to the universal ribosomal protein uL22 family. In terms of assembly, part of the 50S ribosomal subunit.

This protein binds specifically to 23S rRNA; its binding is stimulated by other ribosomal proteins, e.g. L4, L17, and L20. It is important during the early stages of 50S assembly. It makes multiple contacts with different domains of the 23S rRNA in the assembled 50S subunit and ribosome. Functionally, the globular domain of the protein is located near the polypeptide exit tunnel on the outside of the subunit, while an extended beta-hairpin is found that lines the wall of the exit tunnel in the center of the 70S ribosome. This chain is Large ribosomal subunit protein uL22, found in Cellvibrio japonicus (strain Ueda107) (Pseudomonas fluorescens subsp. cellulosa).